The primary structure comprises 490 residues: MALQFTLNQDAPASAAVDCIVVGAFADKTLSPAAQALDSASQGRLTALLARGDVAGKTGSTTLLHDLPGVAAPRVLVVGLGDAGKFGVAPYLKAIGDATRALKTGAVGTALLTLTELTVKARDAAWNIRQAVTVSDHAAYRYTATLGKKKVDETGLTTLAIAGDDARALAVGVATAEGVEFARELGNLPPNYCTPAYLADTAAAFAGKFPGAEAEILDEAQMEALGMGSLLSVARGSANRPRLIVLKWNGGGDARPYVLVGKGITFDTGGVNLKTQGGIEEMKYDMCGGATVIGTFVATVKAELPINLVVVVPAVENAIDGNAYRPSDVITSMSGKTIEVGNTDAEGRLILCDALTYAERFNPEALVDVATLTGACMVALGHQTAGLMSKHDDLANELLAAGEHVFDRAWRLPLWDEYQGLLDSTFADVYNIGGRWGGAITAGCFLSRFTENQRWAHLDIAGVASDEGKRGMATGRPVGLLTQWLLDRAA.

Residues K262 and D267 each contribute to the Mn(2+) site. K274 is a catalytic residue. D285, D344, and E346 together coordinate Mn(2+). R348 is an active-site residue.

The protein belongs to the peptidase M17 family. It depends on Mn(2+) as a cofactor.

The protein resides in the cytoplasm. The enzyme catalyses Release of an N-terminal amino acid, Xaa-|-Yaa-, in which Xaa is preferably Leu, but may be other amino acids including Pro although not Arg or Lys, and Yaa may be Pro. Amino acid amides and methyl esters are also readily hydrolyzed, but rates on arylamides are exceedingly low.. The catalysed reaction is Release of an N-terminal amino acid, preferentially leucine, but not glutamic or aspartic acids.. Functionally, presumably involved in the processing and regular turnover of intracellular proteins. Catalyzes the removal of unsubstituted N-terminal amino acids from various peptides. This is Probable cytosol aminopeptidase from Xanthomonas oryzae pv. oryzae (strain MAFF 311018).